The following is a 192-amino-acid chain: Phosphoheptose isomerase (192 aa).

Residues 37–192 form the SIS domain; it reads LADSFKAGGK…IQLIEKEMVK (156 aa). Substrate is bound at residue 52 to 54; it reads NGG. 2 residues coordinate Zn(2+): histidine 61 and glutamate 65. Substrate-binding positions include glutamate 65, 93–94, 119–121, serine 124, and glutamine 172; these read ND and STS. Zn(2+) is bound by residues glutamine 172 and histidine 180.

It belongs to the SIS family. GmhA subfamily. In terms of assembly, homotetramer. Zn(2+) is required as a cofactor.

It localises to the cytoplasm. It catalyses the reaction 2 D-sedoheptulose 7-phosphate = D-glycero-alpha-D-manno-heptose 7-phosphate + D-glycero-beta-D-manno-heptose 7-phosphate. It participates in carbohydrate biosynthesis; D-glycero-D-manno-heptose 7-phosphate biosynthesis; D-glycero-alpha-D-manno-heptose 7-phosphate and D-glycero-beta-D-manno-heptose 7-phosphate from sedoheptulose 7-phosphate: step 1/1. Functionally, catalyzes the isomerization of sedoheptulose 7-phosphate in D-glycero-D-manno-heptose 7-phosphate. The sequence is that of Phosphoheptose isomerase from Salmonella agona (strain SL483).